Reading from the N-terminus, the 656-residue chain is Chaperone protein DnaK (656 aa).

Disordered regions lie at residues 488-532 (EMQE…DAVD) and 579-656 (YQQQ…DEDE). Residues 492–513 (EAEKHAEEDEKRRERIEARNEA) are compositionally biased toward basic and acidic residues. The span at 523-532 (LLDENEDAVD) shows a compositional bias: acidic residues. The segment covering 584–635 (GEGGAGAGAGAAGGMGGAGPGGMGGAGPGGMGGAGPGGMGGAGPGAGAGQQG) has biased composition (gly residues). The segment covering 636 to 656 (DGEEFVDADFEDVDDEDDEDE) has biased composition (acidic residues).

The protein belongs to the heat shock protein 70 family.

Functionally, acts as a chaperone. The sequence is that of Chaperone protein DnaK from Natronomonas pharaonis (strain ATCC 35678 / DSM 2160 / CIP 103997 / JCM 8858 / NBRC 14720 / NCIMB 2260 / Gabara) (Halobacterium pharaonis).